Consider the following 451-residue polypeptide: Chromosomal replication initiator protein DnaA (451 aa).

A domain I, interacts with DnaA modulators region spans residues Met-1 to Tyr-71. Residues Tyr-71–Glu-112 form a domain II region. Residues Gln-113–Ser-329 are domain III, AAA+ region. Gly-157, Gly-159, Lys-160, and Thr-161 together coordinate ATP. A domain IV, binds dsDNA region spans residues Lys-330 to Gln-451.

The protein belongs to the DnaA family. As to quaternary structure, oligomerizes as a right-handed, spiral filament on DNA at oriC.

Its subcellular location is the cytoplasm. Its function is as follows. Plays an essential role in the initiation and regulation of chromosomal replication. ATP-DnaA binds to the origin of replication (oriC) to initiate formation of the DNA replication initiation complex once per cell cycle. Binds the DnaA box (a 9 base pair repeat at the origin) and separates the double-stranded (ds)DNA. Forms a right-handed helical filament on oriC DNA; dsDNA binds to the exterior of the filament while single-stranded (ss)DNA is stabiized in the filament's interior. The ATP-DnaA-oriC complex binds and stabilizes one strand of the AT-rich DNA unwinding element (DUE), permitting loading of DNA polymerase. After initiation quickly degrades to an ADP-DnaA complex that is not apt for DNA replication. Binds acidic phospholipids. In Staphylococcus epidermidis (strain ATCC 35984 / DSM 28319 / BCRC 17069 / CCUG 31568 / BM 3577 / RP62A), this protein is Chromosomal replication initiator protein DnaA.